The sequence spans 327 residues: Zinc transport protein ZntB (327 aa).

At 1–273 the chain is on the cytoplasmic side; that stretch reads MEAIKGADVN…ARRTYTMSLM (273 aa). The helical transmembrane segment at 274-294 threads the bilayer; sequence AMVFLPSTFLTGLFGVNLGGI. Over 295 to 300 the chain is Periplasmic; that stretch reads PGGGWR. The helical transmembrane segment at 301-321 threads the bilayer; that stretch reads FGFSLFCILLVVLIGGVALWL. The Cytoplasmic segment spans residues 322–327; that stretch reads HRSKWL.

It belongs to the CorA metal ion transporter (MIT) (TC 1.A.35) family.

The protein resides in the cell inner membrane. It carries out the reaction Zn(2+)(out) + H(+)(out) = Zn(2+)(in) + H(+)(in). Functionally, zinc transporter. Acts as a Zn(2+):proton symporter, which likely mediates zinc ion uptake. In Escherichia fergusonii (strain ATCC 35469 / DSM 13698 / CCUG 18766 / IAM 14443 / JCM 21226 / LMG 7866 / NBRC 102419 / NCTC 12128 / CDC 0568-73), this protein is Zinc transport protein ZntB.